The primary structure comprises 70 residues: Conotoxin ArMKLT2-0111 (70 aa).

An N-terminal signal peptide occupies residues 1–22; the sequence is MKLTCVLIIAVLFLTACQLTTG. Residues 23–40 constitute a propeptide that is removed on maturation; sequence EQKDHALRSTDKNSKLTR. Glutamine 41 is subject to Pyrrolidone carboxylic acid. 3 cysteine pairs are disulfide-bonded: cysteine 42/cysteine 56, cysteine 49/cysteine 60, and cysteine 55/cysteine 67.

This sequence belongs to the conotoxin O1 superfamily. As to expression, expressed by the venom duct.

The protein localises to the secreted. This Conus arenatus (Sand-dusted cone) protein is Conotoxin ArMKLT2-0111.